We begin with the raw amino-acid sequence, 147 residues long: Peroxynitrite isomerase (147 aa).

Position 137 (His-137) interacts with heme b.

It belongs to the nitrobindin family. In terms of assembly, homodimer. Heme b serves as cofactor.

The enzyme catalyses peroxynitrite = nitrate. It functions in the pathway nitrogen metabolism. Heme-binding protein able to scavenge peroxynitrite and to protect free L-tyrosine against peroxynitrite-mediated nitration, by acting as a peroxynitrite isomerase that converts peroxynitrite to nitrate. Therefore, this protein likely plays a role in peroxynitrite sensing and in the detoxification of reactive nitrogen and oxygen species (RNS and ROS, respectively). Is able to bind nitric oxide (NO) in vitro, but may act as a sensor of peroxynitrite levels in vivo. The chain is Peroxynitrite isomerase from Frankia alni (strain DSM 45986 / CECT 9034 / ACN14a).